A 472-amino-acid polypeptide reads, in one-letter code: 3-isopropylmalate dehydratase large subunit (472 aa).

Positions 347, 407, and 410 each coordinate [4Fe-4S] cluster.

Belongs to the aconitase/IPM isomerase family. LeuC type 1 subfamily. Heterodimer of LeuC and LeuD. Requires [4Fe-4S] cluster as cofactor.

The catalysed reaction is (2R,3S)-3-isopropylmalate = (2S)-2-isopropylmalate. The protein operates within amino-acid biosynthesis; L-leucine biosynthesis; L-leucine from 3-methyl-2-oxobutanoate: step 2/4. Catalyzes the isomerization between 2-isopropylmalate and 3-isopropylmalate, via the formation of 2-isopropylmaleate. The sequence is that of 3-isopropylmalate dehydratase large subunit from Synechococcus sp. (strain WH7803).